A 56-amino-acid chain; its full sequence is Small ribosomal subunit protein uS14 (56 aa).

Positions 21, 24, 39, and 42 each coordinate Zn(2+).

It belongs to the universal ribosomal protein uS14 family. Component of the 40S small ribosomal subunit. It depends on Zn(2+) as a cofactor.

Its subcellular location is the cytoplasm. It is found in the cytosol. The protein resides in the rough endoplasmic reticulum. This Drosophila melanogaster (Fruit fly) protein is Small ribosomal subunit protein uS14 (RpS29).